Consider the following 799-residue polypeptide: DISARM protein DrmE (799 aa).

Its subcellular location is the cytoplasm. In terms of biological role, component of antiviral defense system DISARM (defense island system associated with restriction-modification), composed of DrmE, DrmA, DrmB, DrmC and DrmMII. DISARM is probably a multi-gene restriction module, this subunit has an unknown function. Expression of DISARM in B.subtilis (strain BEST7003) confers resistance to phages Nf, phi29, phi105, phi3T, SPO1, SPR and SPP1. Protection is over 10(7)-fold against phi3T, 10(4)-10(5)-fold against Nf, phi29, phi105 and SPR, 100-fold against SPO1 and 10-fold against SPP1. DISARM does not interfere with phage adsorption, but instead interferes with (phi3T) DNA replication early in its cycle, preventing replication, circularization and lysogeny and probably causes phage DNA degradation (DNA is degraded in SPP1-infected cells). This chain is DISARM protein DrmE, found in Bacillus paralicheniformis (strain ATCC 9945a / NCIMB 11709 / CD-2).